The primary structure comprises 283 residues: Polyamine aminopropyltransferase (283 aa).

A PABS domain is found at 2 to 237; sequence ELWYTEEHTD…GHWLFGFASK (236 aa). S-methyl-5'-thioadenosine is bound at residue glutamine 31. 2 residues coordinate spermidine: histidine 62 and aspartate 86. S-methyl-5'-thioadenosine-binding positions include glutamate 106 and 137-138; that span reads DG. The active-site Proton acceptor is the aspartate 155. Residue 155-158 participates in spermidine binding; that stretch reads DSTD. Proline 162 serves as a coordination point for S-methyl-5'-thioadenosine.

This sequence belongs to the spermidine/spermine synthase family. As to quaternary structure, homodimer or homotetramer.

Its subcellular location is the cytoplasm. It carries out the reaction S-adenosyl 3-(methylsulfanyl)propylamine + putrescine = S-methyl-5'-thioadenosine + spermidine + H(+). It participates in amine and polyamine biosynthesis; spermidine biosynthesis; spermidine from putrescine: step 1/1. Functionally, catalyzes the irreversible transfer of a propylamine group from the amino donor S-adenosylmethioninamine (decarboxy-AdoMet) to putrescine (1,4-diaminobutane) to yield spermidine. This chain is Polyamine aminopropyltransferase, found in Clostridium perfringens (strain SM101 / Type A).